Consider the following 227-residue polypeptide: Phosphoribosylformylglycinamidine synthase subunit PurQ (227 aa).

A Glutamine amidotransferase type-1 domain is found at 2–226; that stretch reads KFAVIQFPGS…VKAWKEEQVN (225 aa). Cysteine 86 (nucleophile) is an active-site residue. Residues histidine 195 and glutamate 197 contribute to the active site.

Part of the FGAM synthase complex composed of 1 PurL, 1 PurQ and 2 PurS subunits.

It is found in the cytoplasm. The enzyme catalyses N(2)-formyl-N(1)-(5-phospho-beta-D-ribosyl)glycinamide + L-glutamine + ATP + H2O = 2-formamido-N(1)-(5-O-phospho-beta-D-ribosyl)acetamidine + L-glutamate + ADP + phosphate + H(+). It carries out the reaction L-glutamine + H2O = L-glutamate + NH4(+). The protein operates within purine metabolism; IMP biosynthesis via de novo pathway; 5-amino-1-(5-phospho-D-ribosyl)imidazole from N(2)-formyl-N(1)-(5-phospho-D-ribosyl)glycinamide: step 1/2. In terms of biological role, part of the phosphoribosylformylglycinamidine synthase complex involved in the purines biosynthetic pathway. Catalyzes the ATP-dependent conversion of formylglycinamide ribonucleotide (FGAR) and glutamine to yield formylglycinamidine ribonucleotide (FGAM) and glutamate. The FGAM synthase complex is composed of three subunits. PurQ produces an ammonia molecule by converting glutamine to glutamate. PurL transfers the ammonia molecule to FGAR to form FGAM in an ATP-dependent manner. PurS interacts with PurQ and PurL and is thought to assist in the transfer of the ammonia molecule from PurQ to PurL. This is Phosphoribosylformylglycinamidine synthase subunit PurQ from Listeria monocytogenes serotype 4b (strain CLIP80459).